A 138-amino-acid polypeptide reads, in one-letter code: Endoribonuclease YbeY (138 aa).

3 residues coordinate Zn(2+): H98, H102, and H108.

The protein belongs to the endoribonuclease YbeY family. It depends on Zn(2+) as a cofactor.

The protein resides in the cytoplasm. Its function is as follows. Single strand-specific metallo-endoribonuclease involved in late-stage 70S ribosome quality control and in maturation of the 3' terminus of the 16S rRNA. This is Endoribonuclease YbeY from Thermosipho melanesiensis (strain DSM 12029 / CIP 104789 / BI429).